The following is a 95-amino-acid chain: Protein TusB (95 aa).

Belongs to the DsrH/TusB family. As to quaternary structure, heterohexamer, formed by a dimer of trimers. The hexameric TusBCD complex contains 2 copies each of TusB, TusC and TusD. The TusBCD complex interacts with TusE.

It is found in the cytoplasm. Functionally, part of a sulfur-relay system required for 2-thiolation of 5-methylaminomethyl-2-thiouridine (mnm(5)s(2)U) at tRNA wobble positions. This chain is Protein TusB, found in Escherichia coli (strain K12 / MC4100 / BW2952).